Here is a 127-residue protein sequence, read N- to C-terminus: Fluoride-specific ion channel FluC (127 aa).

A run of 4 helical transmembrane segments spans residues 4–24, 39–59, 68–88, and 102–122; these read LDYL…YLVS, GTII…FAAI, AILF…TFTY, and VAYA…GMIL. 2 residues coordinate Na(+): Gly-78 and Thr-81.

The protein belongs to the fluoride channel Fluc/FEX (TC 1.A.43) family.

It is found in the cell inner membrane. It catalyses the reaction fluoride(in) = fluoride(out). Na(+) is not transported, but it plays an essential structural role and its presence is essential for fluoride channel function. Its function is as follows. Fluoride-specific ion channel. Important for reducing fluoride concentration in the cell, thus reducing its toxicity. The chain is Fluoride-specific ion channel FluC from Thermotoga petrophila (strain ATCC BAA-488 / DSM 13995 / JCM 10881 / RKU-1).